The following is a 220-amino-acid chain: Large ribosomal subunit protein uL3 (220 aa).

Residues 137-159 (GASHGAHKNHRKPGSIGGASTPS) form a disordered region.

The protein belongs to the universal ribosomal protein uL3 family. As to quaternary structure, part of the 50S ribosomal subunit. Forms a cluster with proteins L14 and L19.

One of the primary rRNA binding proteins, it binds directly near the 3'-end of the 23S rRNA, where it nucleates assembly of the 50S subunit. The protein is Large ribosomal subunit protein uL3 of Renibacterium salmoninarum (strain ATCC 33209 / DSM 20767 / JCM 11484 / NBRC 15589 / NCIMB 2235).